Reading from the N-terminus, the 213-residue chain is rRNA N(6)-adenosine-methyltransferase Mettl5 (213 aa).

Residues glutamine 28, threonine 31, glycine 59, cysteine 62, and 108-109 contribute to the S-adenosyl-L-methionine site; that span reads DV.

This sequence belongs to the methyltransferase superfamily. PrmA family. In terms of assembly, heterodimer; heterodimerizes with Trmt112. In terms of tissue distribution, enriched in the brain.

The protein localises to the cytoplasm. It carries out the reaction adenosine in rRNA + S-adenosyl-L-methionine = N(6)-methyladenosine in rRNA + S-adenosyl-L-homocysteine + H(+). Catalytic subunit of a heterodimer with Trmt112, which specifically methylates the 6th position of adenine in 18S rRNA. The sequence is that of rRNA N(6)-adenosine-methyltransferase Mettl5 from Drosophila melanogaster (Fruit fly).